The sequence spans 137 residues: Basic phospholipase A2 homolog 2 (137 aa).

The N-terminal stretch at 1-16 (MRTLWIMAVLLVGVEG) is a signal peptide. Intrachain disulfides connect cysteine 42/cysteine 131, cysteine 44/cysteine 60, cysteine 59/cysteine 111, cysteine 65/cysteine 137, cysteine 66/cysteine 104, cysteine 73/cysteine 97, and cysteine 91/cysteine 102. Residues 121 to 133 (KKYRYYLKPLCKK) form an important for membrane-damaging activities in eukaryotes and bacteria; heparin-binding region.

The protein belongs to the phospholipase A2 family. Group II subfamily. K49 sub-subfamily. In terms of assembly, homodimer; non-covalently linked. Binds to heparin. In terms of processing, it binds long-chain fatty acids covalently by a rapid, spontaneous, and autocatalytic process. When acylated, it binds to the surface of liposomes and isolated muscle membranes, with the fatty acid moiety inserted into the lipid bilayer and possibly acting as an anchor. In terms of tissue distribution, expressed by the venom gland.

It is found in the secreted. With respect to regulation, heparin inhibits the myotoxic activity. Suramin inhibits the myotoxic activity. High level of membrane cholesterol content reduces cytolytic activity, whereas low level of membrane cholesterol content increases cytolytic activity. In terms of biological role, snake venom phospholipase A2 homolog that lacks enzymatic activity. Is myotoxic and induces a dose-dependent edema in the mouse foot pad. Also exhibits strong anticoagulant effects by binding to factor Xa (F10) and inhibiting the prothrombinase activity (IC(50) is 3 nM). In addition, it shows cytotoxic activity to a variety of cell types and bactericidal activity to a variety of Gram-negative and Gram-positive bacteria. Also induces a very rapid release of large amounts of potassium ions and ATP from muscle cells, which accounts for the pain reaction characteristic of viperid envenomations. The released ATP amplifies the effect of the myotoxins, acting as a 'danger signal', which spreads and causes further damage by acting on purinergic receptors. A model of myotoxic mechanism has been proposed: an apo Lys49-PLA2 is activated by the entrance of a hydrophobic molecule (e.g. fatty acid) at the hydrophobic channel of the protein leading to a reorientation of a monomer. This reorientation causes a transition between 'inactive' to 'active' states, causing alignment of C-terminal and membrane-docking sites (MDoS) side-by-side and putting the membrane-disruption sites (MDiS) in the same plane, exposed to solvent and in a symmetric position for both monomers. The MDoS region stabilizes the toxin on membrane by the interaction of charged residues with phospholipid head groups. Subsequently, the MDiS region destabilizes the membrane with penetration of hydrophobic residues. This insertion causes a disorganization of the membrane, allowing an uncontrolled influx of ions (i.e. calcium and sodium), and eventually triggering irreversible intracellular alterations and cell death. The sequence is that of Basic phospholipase A2 homolog 2 from Bothrops asper (Terciopelo).